Consider the following 447-residue polypeptide: N-succinylarginine dihydrolase (447 aa).

Substrate contacts are provided by residues 19–28 (AGLSFGNEAS), Asn110, and 137–138 (HR). Residue Glu174 is part of the active site. Residue Arg212 participates in substrate binding. His248 is a catalytic residue. Residues Asp250 and Asn359 each coordinate substrate. Cys365 acts as the Nucleophile in catalysis.

This sequence belongs to the succinylarginine dihydrolase family. In terms of assembly, homodimer.

The enzyme catalyses N(2)-succinyl-L-arginine + 2 H2O + 2 H(+) = N(2)-succinyl-L-ornithine + 2 NH4(+) + CO2. It functions in the pathway amino-acid degradation; L-arginine degradation via AST pathway; L-glutamate and succinate from L-arginine: step 2/5. In terms of biological role, catalyzes the hydrolysis of N(2)-succinylarginine into N(2)-succinylornithine, ammonia and CO(2). This is N-succinylarginine dihydrolase from Escherichia coli (strain SMS-3-5 / SECEC).